The sequence spans 691 residues: Cyclic nucleotide-gated channel alpha-1 (691 aa).

Over 1 to 168 (MKKNIINTWY…PAGNMYYNWL (168 aa)) the chain is Cytoplasmic. A disordered region spans residues 31–151 (ENGARSSFSD…KGKDKKEEEK (121 aa)). Over residues 39–56 (SDDDGDDDSASMFEESEN) the composition is skewed to acidic residues. Basic and acidic residues-rich tracts occupy residues 57-76 (ETPHARDSCRNNSQRRDPSQ) and 112-151 (SKSGDKNENKKDSEKKKKKEKEKEKKNKEEKGKDKKEEEK). A helical transmembrane segment spans residues 169–190 (FCITLPVMYNWTMVIARACFDE). Residues 191 to 200 (LQSDYLEYWI) lie on the Extracellular side of the membrane. The chain crosses the membrane as a helical span at residues 201–221 (IFDYLSDIVYLLDMFVRTRTG). The Cytoplasmic portion of the chain corresponds to 222-246 (YLEQGLLVREEAKLIEKYKSNLQFK). Residues 247 to 265 (LDFLSVIPTDLLYFKLGWN) form a helical membrane-spanning segment. Over 266 to 270 (YPEIR) the chain is Extracellular. A helical membrane pass occupies residues 271–289 (LNRLLRISRMFEFFQRTET). The Cytoplasmic portion of the chain corresponds to 290-296 (RTNYPNI). The tract at residues 294–402 (PNIFRISNLV…GNIGSMISNM (109 aa)) is ion conduction pathway. A helical transmembrane segment spans residues 297–320 (FRISNLVMYIVIIIHWNACVYFSI). The Extracellular segment spans residues 321-343 (SKAIGFGNDTWVYPDVNDPEFGR). The N-linked (GlcNAc...) asparagine glycan is linked to Asn-328. The next 2 membrane-spanning stretches (helical) occupy residues 344–378 (LARKYVYSLYWSTLTLTTIGETPPPVRDSEYVFVV) and 379–403 (VDFLIGVLIFATIVGNIGSMISNMN). The tract at residues 361–364 (TIGE) is selectivity filter. Positions 404–480 (AARAEFQARI…DTLKKVRIFA (77 aa)) are C-linker. Topologically, residues 404–691 (AARAEFQARI…ESRPLDSTQD (288 aa)) are cytoplasmic. A cyclic nucleotide-binding domain region spans residues 484-604 (AGLLVELVLK…EEKGKQILMK (121 aa)). 3',5'-cyclic GMP is bound by residues Gly-544, Ser-547, Arg-560, and Thr-561. Arg-560 and Thr-561 together coordinate 3',5'-cyclic AMP. Residues 622–676 (LEEKVTRMEGSVDLLQTRFARILAEYESMQQKLKQRLTKVERFLKPIIDTEFSAL) are a coiled coil.

It belongs to the cyclic nucleotide-gated cation channel (TC 1.A.1.5) family. CNGA1 subfamily. As to quaternary structure, forms heterotetrameric channels composed of CNGA1 and CNGB1 subunits with 3:1 stoichiometry. May also form cyclic nucleotide-activated homotetrameric channels, that are efficiently activated by saturating cGMP, but poorly activated by saturating cAMP compared to the heterotetramer with CNGB1. The channel binds Ca(2+)-bound CALM1 via CaM1 and CaM2 regions of the CNGB1 subunit; this interaction modulates the affinity of the channel for cNMPs in response to intracellular Ca(2+) levels.

Its subcellular location is the cell membrane. It carries out the reaction Ca(2+)(in) = Ca(2+)(out). The enzyme catalyses Na(+)(in) = Na(+)(out). The catalysed reaction is K(+)(in) = K(+)(out). It catalyses the reaction NH4(+)(in) = NH4(+)(out). It carries out the reaction Rb(+)(in) = Rb(+)(out). The enzyme catalyses Li(+)(in) = Li(+)(out). The catalysed reaction is Cs(+)(in) = Cs(+)(out). Functionally, pore-forming subunit of the rod cyclic nucleotide-gated channel. Mediates rod photoresponses at dim light converting transient changes in intracellular cGMP levels into electrical signals. In the dark, cGMP levels are high and keep the channel open enabling a steady inward current carried by Na(+) and Ca(2+) ions that leads to membrane depolarization and neurotransmitter release from synaptic terminals. Upon photon absorption cGMP levels decline leading to channel closure and membrane hyperpolarization that ultimately slows neurotransmitter release and signals the presence of light, the end point of the phototransduction cascade. Conducts cGMP- and cAMP-gated ion currents, with permeability for monovalent and divalent cations. The selectivity for Ca(2+) over Na(+) increases with cGMP concentrations, whereas the selectivity among monovalent ions is independent of the cGMP levels. This is Cyclic nucleotide-gated channel alpha-1 from Canis lupus familiaris (Dog).